Reading from the N-terminus, the 274-residue chain is Rhamnulose-1-phosphate aldolase (274 aa).

Glu117 is a catalytic residue. Residues His141, His143, and His212 each contribute to the Zn(2+) site.

It belongs to the aldolase class II family. RhaD subfamily. In terms of assembly, homotetramer. Zn(2+) serves as cofactor.

Its subcellular location is the cytoplasm. It catalyses the reaction L-rhamnulose 1-phosphate = (S)-lactaldehyde + dihydroxyacetone phosphate. The protein operates within carbohydrate degradation; L-rhamnose degradation; glycerone phosphate from L-rhamnose: step 3/3. In terms of biological role, catalyzes the reversible cleavage of L-rhamnulose-1-phosphate to dihydroxyacetone phosphate (DHAP) and L-lactaldehyde. The chain is Rhamnulose-1-phosphate aldolase from Pectobacterium atrosepticum (strain SCRI 1043 / ATCC BAA-672) (Erwinia carotovora subsp. atroseptica).